The sequence spans 225 residues: Membrin-11 (225 aa).

At A2 the chain carries N-acetylalanine. Residues 2 to 200 lie on the Cytoplasmic side of the membrane; that stretch reads ASGIVEGGGS…VLRLIERRNR (199 aa). The chain crosses the membrane as a helical; Anchor for type IV membrane protein span at residues 201-221; that stretch reads VDTWIKYAGMIATLVILYLFI. The Vesicular segment spans residues 222–225; sequence RWTR.

The protein belongs to the GOSR2 family.

It is found in the golgi apparatus membrane. Involved in transport of proteins from the cis/medial-Golgi to the trans-Golgi network. The sequence is that of Membrin-11 (MEMB11) from Arabidopsis thaliana (Mouse-ear cress).